Consider the following 183-residue polypeptide: TATA-box-binding protein (183 aa).

2 consecutive repeat copies span residues 7 to 83 (IENV…ARTL) and 99 to 177 (VQNI…RQQL).

The protein belongs to the TBP family.

General factor that plays a role in the activation of archaeal genes transcribed by RNA polymerase. Binds specifically to the TATA box promoter element which lies close to the position of transcription initiation. In Methanothrix thermoacetophila (strain DSM 6194 / JCM 14653 / NBRC 101360 / PT) (Methanosaeta thermophila), this protein is TATA-box-binding protein.